Consider the following 376-residue polypeptide: Chaperone protein DnaJ (376 aa).

Positions 5–70 constitute a J domain; sequence DYYEILGVSK…QKRAAYDQYG (66 aa). Residues 131 to 209 form a CR-type zinc finger; it reads GVTKEIRIPT…CHGHGRVERS (79 aa). 8 residues coordinate Zn(2+): Cys-144, Cys-147, Cys-161, Cys-164, Cys-183, Cys-186, Cys-197, and Cys-200. CXXCXGXG motif repeat units follow at residues 144–151, 161–168, 183–190, and 197–204; these read CDVCHGSG, CPTCHGSG, CPHCQGRG, and CNKCHGHG.

Belongs to the DnaJ family. Homodimer. Zn(2+) is required as a cofactor.

It is found in the cytoplasm. Functionally, participates actively in the response to hyperosmotic and heat shock by preventing the aggregation of stress-denatured proteins and by disaggregating proteins, also in an autonomous, DnaK-independent fashion. Unfolded proteins bind initially to DnaJ; upon interaction with the DnaJ-bound protein, DnaK hydrolyzes its bound ATP, resulting in the formation of a stable complex. GrpE releases ADP from DnaK; ATP binding to DnaK triggers the release of the substrate protein, thus completing the reaction cycle. Several rounds of ATP-dependent interactions between DnaJ, DnaK and GrpE are required for fully efficient folding. Also involved, together with DnaK and GrpE, in the DNA replication of plasmids through activation of initiation proteins. This Escherichia fergusonii (strain ATCC 35469 / DSM 13698 / CCUG 18766 / IAM 14443 / JCM 21226 / LMG 7866 / NBRC 102419 / NCTC 12128 / CDC 0568-73) protein is Chaperone protein DnaJ.